The chain runs to 356 residues: Peptide chain release factor 1 (356 aa).

Q233 carries the N5-methylglutamine modification.

The protein belongs to the prokaryotic/mitochondrial release factor family. In terms of processing, methylated by PrmC. Methylation increases the termination efficiency of RF1.

It localises to the cytoplasm. Peptide chain release factor 1 directs the termination of translation in response to the peptide chain termination codons UAG and UAA. This Shouchella clausii (strain KSM-K16) (Alkalihalobacillus clausii) protein is Peptide chain release factor 1.